We begin with the raw amino-acid sequence, 187 residues long: Peptide deformylase (187 aa).

Residues Cys107 and His149 each coordinate Fe cation. Glu150 is a catalytic residue. His153 is a Fe cation binding site.

The protein belongs to the polypeptide deformylase family. Fe(2+) serves as cofactor.

It catalyses the reaction N-terminal N-formyl-L-methionyl-[peptide] + H2O = N-terminal L-methionyl-[peptide] + formate. Functionally, removes the formyl group from the N-terminal Met of newly synthesized proteins. Requires at least a dipeptide for an efficient rate of reaction. N-terminal L-methionine is a prerequisite for activity but the enzyme has broad specificity at other positions. This chain is Peptide deformylase, found in Synechocystis sp. (strain ATCC 27184 / PCC 6803 / Kazusa).